Reading from the N-terminus, the 782-residue chain is Translation initiation factor IF-2 (782 aa).

Residues 47 to 196 (DNAIDGTNKK…TPPKPKELPE (150 aa)) are disordered. Over residues 53–65 (TNKKAEAPKKETT) the composition is skewed to basic and acidic residues. Positions 66–81 (SNENGNSKGPNKPNMT) are enriched in polar residues. Low complexity-rich tracts occupy residues 82 to 93 (NSNEKSNKPNNP) and 118 to 170 (NTSK…NNKG). In terms of domain architecture, tr-type G spans 283-452 (ERPPVVTIMG…LLVSEVEELK (170 aa)). The interval 292–299 (GHVDHGKT) is G1. 292–299 (GHVDHGKT) contributes to the GTP binding site. The segment at 317–321 (GITQH) is G2. Residues 338–341 (DTPG) form a G3 region. GTP is bound by residues 338–342 (DTPGH) and 392–395 (NKID). The tract at residues 392–395 (NKID) is G4. The G5 stretch occupies residues 428–430 (SAK).

This sequence belongs to the TRAFAC class translation factor GTPase superfamily. Classic translation factor GTPase family. IF-2 subfamily.

It is found in the cytoplasm. Its function is as follows. One of the essential components for the initiation of protein synthesis. Protects formylmethionyl-tRNA from spontaneous hydrolysis and promotes its binding to the 30S ribosomal subunits. Also involved in the hydrolysis of GTP during the formation of the 70S ribosomal complex. The sequence is that of Translation initiation factor IF-2 from Listeria monocytogenes serotype 4b (strain CLIP80459).